The following is a 294-amino-acid chain: MSETLQISRVAGTNGAPTHVTVTAQALFQILDHALRREEEQSKVIGTLVGIRSEDGSEVEVRNAYAVPHSESEQEMTIDLEYNPTMLALHRKAFPKEVIVGWYATSSELNTFSGLIHDYYTQLDGTPAIHLTVEAANLADTLLPRTYVASAVGIDPSKNSGNCVFVPISNEVKFNDSADRAALEAISSARESPERSINLTSDLANLENSLTQVLDMLERVQTYVARVISGEESSEKAQQVGKQLLSTLTLTPSLDAQNLEALFNSHLQDVLMVVYLANTVKTQLQLSAKLTTLV.

Positions 20 to 163 constitute an MPN domain; that stretch reads VTVTAQALFQ…IDPSKNSGNC (144 aa).

Belongs to the eIF-3 subunit F family. Component of the eukaryotic translation initiation factor 3 (eIF-3) complex.

It is found in the cytoplasm. Its function is as follows. Component of the eukaryotic translation initiation factor 3 (eIF-3) complex, which is involved in protein synthesis of a specialized repertoire of mRNAs and, together with other initiation factors, stimulates binding of mRNA and methionyl-tRNAi to the 40S ribosome. The eIF-3 complex specifically targets and initiates translation of a subset of mRNAs involved in cell proliferation. The chain is Eukaryotic translation initiation factor 3 subunit F from Yarrowia lipolytica (strain CLIB 122 / E 150) (Yeast).